The chain runs to 125 residues: Small ribosomal subunit protein uS12 (125 aa).

3-methylthioaspartic acid is present on Asp-89.

It belongs to the universal ribosomal protein uS12 family. As to quaternary structure, part of the 30S ribosomal subunit. Contacts proteins S8 and S17. May interact with IF1 in the 30S initiation complex.

Functionally, with S4 and S5 plays an important role in translational accuracy. Its function is as follows. Interacts with and stabilizes bases of the 16S rRNA that are involved in tRNA selection in the A site and with the mRNA backbone. Located at the interface of the 30S and 50S subunits, it traverses the body of the 30S subunit contacting proteins on the other side and probably holding the rRNA structure together. The combined cluster of proteins S8, S12 and S17 appears to hold together the shoulder and platform of the 30S subunit. This is Small ribosomal subunit protein uS12 from Clostridium novyi (strain NT).